A 422-amino-acid polypeptide reads, in one-letter code: 26S proteasome non-ATPase regulatory subunit 11B (422 aa).

In terms of domain architecture, PCI spans 228 to 392 (AYSYFFEAFE…DVLIIFEEPP (165 aa)).

Belongs to the proteasome subunit S9 family. Component of the lid subcomplex of the 19S proteasome regulatory particle complex (also named PA700 complex). The 26S proteasome consists of a 20S proteasome core and two 19S regulatory subunits.

It localises to the nucleus. The protein localises to the cytoplasm. Its subcellular location is the cytosol. In terms of biological role, component of the lid subcomplex of the 26S proteasome, a multiprotein complex involved in the ATP-dependent degradation of ubiquitinated proteins. In the complex, psmd11b is required for proteasome assembly. The sequence is that of 26S proteasome non-ATPase regulatory subunit 11B (psmd11b) from Danio rerio (Zebrafish).